The primary structure comprises 287 residues: MKRIMLFLATNLAVVLVLSVVLNIVYATTGMQPGSLSGLLVMAAVFGFGGALISLMMSKGMALRSVGGMVIESPRNETEHWLLETVGRQAQQAGIGMPTVAIYDSADINAFATGAKRDDSLVAVSTGLLHNMTRDEAEAVLAHEVSHIANGDMVTMTLMQGVVNTFVIFLSRFIANIVASNDDEEGQGTNMMVYFGVSMVLELVFGFLASFITMWYSRHREFHADAGAARLVGKEKMIAALERLKMSQESKLDGTMMAFGINGKQSLTELLMSHPPLDKRIAALRNQ.

2 helical membrane passes run 4-24 (IMLFLATNLAVVLVLSVVLNI) and 36-56 (LSGLLVMAAVFGFGGALISLM). Position 143 (His-143) interacts with Zn(2+). The active site involves Glu-144. His-147 provides a ligand contact to Zn(2+). 2 consecutive transmembrane segments (helical) span residues 158 to 178 (LMQGVVNTFVIFLSRFIANIV) and 192 to 212 (MVYFGVSMVLELVFGFLASFI). Position 221 (Glu-221) interacts with Zn(2+).

Belongs to the peptidase M48B family. Zn(2+) is required as a cofactor.

The protein localises to the cell inner membrane. This chain is Protease HtpX, found in Vibrio parahaemolyticus serotype O3:K6 (strain RIMD 2210633).